The primary structure comprises 964 residues: Integrator complex subunit 4 (964 aa).

K27 carries the N6-acetyllysine modification. 8 HEAT repeats span residues A67–F106, Q146–S184, G191–K229, L230–Y264, I278–S314, N370–S406, P407–L445, and E447–L485. A Glycyl lysine isopeptide (Lys-Gly) (interchain with G-Cter in SUMO1); alternate cross-link involves residue K792. K792 is covalently cross-linked (Glycyl lysine isopeptide (Lys-Gly) (interchain with G-Cter in SUMO2); alternate).

This sequence belongs to the Integrator subunit 4 family. Component of the Integrator complex, composed of core subunits INTS1, INTS2, INTS3, INTS4, INTS5, INTS6, INTS7, INTS8, INTS9/RC74, INTS10, INTS11/CPSF3L, INTS12, INTS13, INTS14 and INTS15. The core complex associates with protein phosphatase 2A subunits PPP2CA and PPP2R1A, to form the Integrator-PP2A (INTAC) complex. INTS4 is part of the RNA endonuclease subcomplex, composed of INTS4, INTS9, INTS11 and inositol hexakisphosphate (InsP6). Interacts with BRAT1; interaction is required for the assembly of the RNA endonuclease subcomplex.

It is found in the nucleus. It localises to the cytoplasm. Component of the integrator complex, a multiprotein complex that terminates RNA polymerase II (Pol II) transcription in the promoter-proximal region of genes. The integrator complex provides a quality checkpoint during transcription elongation by driving premature transcription termination of transcripts that are unfavorably configured for transcriptional elongation: the complex terminates transcription by (1) catalyzing dephosphorylation of the C-terminal domain (CTD) of Pol II subunit POLR2A/RPB1 and SUPT5H/SPT5, (2) degrading the exiting nascent RNA transcript via endonuclease activity and (3) promoting the release of Pol II from bound DNA. The integrator complex is also involved in terminating the synthesis of non-coding Pol II transcripts, such as enhancer RNAs (eRNAs), small nuclear RNAs (snRNAs), telomerase RNAs and long non-coding RNAs (lncRNAs). Within the integrator complex, INTS4 acts as an scaffold that links INTS9 and INTS11. Mediates recruitment of cytoplasmic dynein to the nuclear envelope, probably as component of the integrator complex. This Mus musculus (Mouse) protein is Integrator complex subunit 4 (Ints4).